The chain runs to 90 residues: Small ribosomal subunit protein uS17 (90 aa).

It belongs to the universal ribosomal protein uS17 family. In terms of assembly, part of the 30S ribosomal subunit.

In terms of biological role, one of the primary rRNA binding proteins, it binds specifically to the 5'-end of 16S ribosomal RNA. This chain is Small ribosomal subunit protein uS17, found in Dehalococcoides mccartyi (strain ATCC BAA-2100 / JCM 16839 / KCTC 5957 / BAV1).